Reading from the N-terminus, the 363-residue chain is NAD(P)H-quinone oxidoreductase subunit 1, chloroplastic (363 aa).

6 helical membrane-spanning segments follow: residues 30 to 50 (LVPI…IVWL), 98 to 118 (FSIG…VIPF), 127 to 147 (LSIG…GLLM), 248 to 268 (YSGI…LVSS), 300 to 320 (VFGT…FLFI), and 336 to 356 (LLNL…LLTT).

Belongs to the complex I subunit 1 family. NDH is composed of at least 16 different subunits, 5 of which are encoded in the nucleus.

Its subcellular location is the plastid. It localises to the chloroplast thylakoid membrane. The catalysed reaction is a plastoquinone + NADH + (n+1) H(+)(in) = a plastoquinol + NAD(+) + n H(+)(out). It carries out the reaction a plastoquinone + NADPH + (n+1) H(+)(in) = a plastoquinol + NADP(+) + n H(+)(out). NDH shuttles electrons from NAD(P)H:plastoquinone, via FMN and iron-sulfur (Fe-S) centers, to quinones in the photosynthetic chain and possibly in a chloroplast respiratory chain. The immediate electron acceptor for the enzyme in this species is believed to be plastoquinone. Couples the redox reaction to proton translocation, and thus conserves the redox energy in a proton gradient. This Drimys granadensis protein is NAD(P)H-quinone oxidoreductase subunit 1, chloroplastic.